We begin with the raw amino-acid sequence, 433 residues long: UDP-N-acetylmuramate--L-alanine ligase (433 aa).

Residue 108-114 (GAHGKTS) coordinates ATP.

This sequence belongs to the MurCDEF family.

It is found in the cytoplasm. The catalysed reaction is UDP-N-acetyl-alpha-D-muramate + L-alanine + ATP = UDP-N-acetyl-alpha-D-muramoyl-L-alanine + ADP + phosphate + H(+). The protein operates within cell wall biogenesis; peptidoglycan biosynthesis. Cell wall formation. The sequence is that of UDP-N-acetylmuramate--L-alanine ligase from Anoxybacillus flavithermus (strain DSM 21510 / WK1).